A 336-amino-acid polypeptide reads, in one-letter code: Torsin-1B (336 aa).

A signal peptide spans 1–24 (MLRAGWLRGAAALALLLAARVVAA). N-linked (GlcNAc...) asparagine glycosylation is present at N64. Position 109–116 (109–116 (GWAGTGKN)) interacts with ATP. N165 carries an N-linked (GlcNAc...) asparagine glycan.

This sequence belongs to the ClpA/ClpB family. Torsin subfamily. Homohexamer. Interacts with TOR1A; the interaction may be specific of neural tissues. Interacts with TOR1AIP1; TOR1AIP1 is required for TOR1B location on the nuclear membrane. Interacts (ATP-bound) with TOR1AIP2; important for endoplasmic reticulum integrity. N-glycosylated. As to expression, widely expressed with low levels in brain.

Its subcellular location is the endoplasmic reticulum lumen. It localises to the nucleus membrane. The enzyme catalyses ATP + H2O = ADP + phosphate + H(+). Its function is as follows. May serve as a molecular chaperone assisting in the proper folding of secreted and/or membrane proteins. Plays a role in non-neural cells nuclear envelope and endoplasmic reticulum integrity. May have a redundant function with TOR1A in non-neural tissues. This chain is Torsin-1B (TOR1B), found in Homo sapiens (Human).